Here is a 124-residue protein sequence, read N- to C-terminus: Protein YobA (124 aa).

The N-terminal stretch at 1-26 (MASTARSLRYALAILTTSLVTPSVWA) is a signal peptide. Cu cation-binding residues include His27 and His113.

This sequence belongs to the CopC family.

It localises to the periplasm. The polypeptide is Protein YobA (yobA) (Escherichia coli O6:H1 (strain CFT073 / ATCC 700928 / UPEC)).